The sequence spans 447 residues: Zinc finger protein ZIC 1 (447 aa).

The segment at 225 to 260 (LICKWIEPEQLANPKKSCNKTFSTMHELVTHVTVEH) adopts a C2H2-type 1; atypical zinc-finger fold. A C2H2-type 2; atypical zinc finger spans residues 269 to 296 (HICFWEECPREGKPFKAKYKLVNHIRVH). C2H2-type zinc fingers lie at residues 302 to 326 (FPCP…KRTH), 332 to 356 (FKCE…MHVH), and 362 to 384 (YLCK…MKVH). Residues 375–434 (SSLRKHMKVHESSSQGSQPSPAASSGYESSTPPTIVSPTTDNPTTSSMSPSSSAVHHTAG) form a disordered region. Residues 386–427 (SSSQGSQPSPAASSGYESSTPPTIVSPTTDNPTTSSMSPSSS) are compositionally biased toward low complexity.

This sequence belongs to the GLI C2H2-type zinc-finger protein family. As to quaternary structure, interacts (via the C2H2-type domains 3, 4 and 5) with MDFIC (via the C2H2-type domains 3, 4 and 5). Interacts with GLI1; the interaction enhances transcription activation. Interacts with GLI2. Interacts with GLI3; the interaction enhances transcription activation. As to expression, expressed in osteoblasts (at protein level). Expressed in the CNS. A high level expression is seen in the cerebellum, while a low level expression is seen in the olfactory bulb, diencephalon, and brainstem. Expressed in lumbar spine and iliac crest.

It is found in the nucleus. The protein localises to the cytoplasm. Functionally, acts as a transcriptional activator. Involved in neurogenesis. Plays important roles in the early stage of organogenesis of the CNS, as well as during dorsal spinal cord development and maturation of the cerebellum. Involved in the spatial distribution of mossy fiber (MF) neurons within the pontine gray nucleus (PGN). Plays a role in the regulation of MF axon pathway choice. Promotes MF migration towards ipsilaterally-located cerebellar territories. May have a role in shear flow mechanotransduction in osteocytes. Retains nuclear GLI1 and GLI3 in the cytoplasm. Binds to the minimal GLI-consensus sequence 5'-TGGGTGGTC-3'. This Mus musculus (Mouse) protein is Zinc finger protein ZIC 1 (Zic1).